The following is a 313-amino-acid chain: D-alanine--D-alanine ligase (313 aa).

The ATP-grasp domain occupies 108 to 308 (KLVWQQTGVP…YSELVVKVLS (201 aa)). Position 138–193 (138–193 (VAKLGLPLFVKPASEGSSVAVLKVKTADALPAALAEAATHDKIVIVEKSIEGGGEY)) interacts with ATP. Mg(2+) is bound by residues Asp-262, Glu-275, and Asn-277.

The protein belongs to the D-alanine--D-alanine ligase family. It depends on Mg(2+) as a cofactor. The cofactor is Mn(2+).

Its subcellular location is the cytoplasm. The enzyme catalyses 2 D-alanine + ATP = D-alanyl-D-alanine + ADP + phosphate + H(+). It participates in cell wall biogenesis; peptidoglycan biosynthesis. Its function is as follows. Cell wall formation. The protein is D-alanine--D-alanine ligase of Burkholderia cenocepacia (strain HI2424).